We begin with the raw amino-acid sequence, 86 residues long: Small ribosomal subunit protein bS16 (86 aa).

Belongs to the bacterial ribosomal protein bS16 family.

The polypeptide is Small ribosomal subunit protein bS16 (Carboxydothermus hydrogenoformans (strain ATCC BAA-161 / DSM 6008 / Z-2901)).